Here is an 82-residue protein sequence, read N- to C-terminus: Cytochrome b559 subunit alpha (82 aa).

A helical membrane pass occupies residues 21 to 35 (VIHSITIPALFIAGW). Histidine 23 contacts heme.

The protein belongs to the PsbE/PsbF family. In terms of assembly, heterodimer of an alpha subunit and a beta subunit. PSII is composed of 1 copy each of membrane proteins PsbA, PsbB, PsbC, PsbD, PsbE, PsbF, PsbH, PsbI, PsbJ, PsbK, PsbL, PsbM, PsbT, PsbX, PsbY, PsbZ, Psb30/Ycf12, peripheral proteins PsbO, CyanoQ (PsbQ), PsbU, PsbV and a large number of cofactors. It forms dimeric complexes. Requires heme b as cofactor.

It localises to the cellular thylakoid membrane. Functionally, this b-type cytochrome is tightly associated with the reaction center of photosystem II (PSII). PSII is a light-driven water:plastoquinone oxidoreductase that uses light energy to abstract electrons from H(2)O, generating O(2) and a proton gradient subsequently used for ATP formation. It consists of a core antenna complex that captures photons, and an electron transfer chain that converts photonic excitation into a charge separation. This chain is Cytochrome b559 subunit alpha, found in Nostoc punctiforme (strain ATCC 29133 / PCC 73102).